Consider the following 542-residue polypeptide: MESQRNILLIGLLFVSFLLWQQWQTDKNPQPVATESSVVASTVTDAHSADVPDADAALPEAVAASKELISVTTDQLTLKINPVGGDIVYSALVGHKLEQDKEEPFVLLQQTKDIYYISQSGLIGRNGIDSSTKGRAHFSSQSQAYTLADGQDTLEIPLTYVADNGVTYTKVFTLHRGKFDVGVEYRINNTSAEQLQVQMYGQIKHSIKKSESSMMMPTYRGAAFSTADTRYEKYSFEDMADKNLDKKTLGGWAAMLQHYFVSAWVPPANDQNTIFSSVSAGGLANIGFRGAVYDVAPGTQQTISAQFYVGPKDQEALSAISESLNLVVDYGFLWWLAIPIHWLLMFYQSFVGNWGVAIILITLTVRGMLYPLTKAQYTSMAKMRNLQPKLQDMKERFGDDRQKMGQAMMELYKKEKVNPMGGCLPILLQMPIFIALYWVLLESYELRHAPFMLWITDLSVQDPYYVLPLLMGVSMFLMQKMQPMAPTMDPMQQKMMQWMPVIFTVFFLWFPAGLVLYWLVGNLVAITQQKIIYAGLEKKGLK.

6 consecutive transmembrane segments (helical) span residues 6–26 (NILL…WQTD), 326–346 (LVVD…LLMF), 350–370 (FVGN…GMLY), 421–441 (GGCL…WVLL), 458–478 (LSVQ…MFLM), and 501–521 (VIFT…WLVG).

This sequence belongs to the OXA1/ALB3/YidC family. Type 1 subfamily. In terms of assembly, interacts with the Sec translocase complex via SecD. Specifically interacts with transmembrane segments of nascent integral membrane proteins during membrane integration.

It is found in the cell inner membrane. Functionally, required for the insertion and/or proper folding and/or complex formation of integral membrane proteins into the membrane. Involved in integration of membrane proteins that insert both dependently and independently of the Sec translocase complex, as well as at least some lipoproteins. Aids folding of multispanning membrane proteins. The sequence is that of Membrane protein insertase YidC from Shewanella loihica (strain ATCC BAA-1088 / PV-4).